Here is a 199-residue protein sequence, read N- to C-terminus: uncharacterized protein (199 aa).

It to M.jannaschii MJ1356.

This is an uncharacterized protein from Methanocaldococcus jannaschii (strain ATCC 43067 / DSM 2661 / JAL-1 / JCM 10045 / NBRC 100440) (Methanococcus jannaschii).